The chain runs to 365 residues: UDP-N-acetylglucosamine--N-acetylmuramyl-(pentapeptide) pyrophosphoryl-undecaprenol N-acetylglucosamine transferase (365 aa).

UDP-N-acetyl-alpha-D-glucosamine-binding positions include 13-15 (TGG), N125, R165, S192, and Q293.

The protein belongs to the glycosyltransferase 28 family. MurG subfamily.

The protein localises to the cell inner membrane. It catalyses the reaction di-trans,octa-cis-undecaprenyl diphospho-N-acetyl-alpha-D-muramoyl-L-alanyl-D-glutamyl-meso-2,6-diaminopimeloyl-D-alanyl-D-alanine + UDP-N-acetyl-alpha-D-glucosamine = di-trans,octa-cis-undecaprenyl diphospho-[N-acetyl-alpha-D-glucosaminyl-(1-&gt;4)]-N-acetyl-alpha-D-muramoyl-L-alanyl-D-glutamyl-meso-2,6-diaminopimeloyl-D-alanyl-D-alanine + UDP + H(+). Its pathway is cell wall biogenesis; peptidoglycan biosynthesis. Cell wall formation. Catalyzes the transfer of a GlcNAc subunit on undecaprenyl-pyrophosphoryl-MurNAc-pentapeptide (lipid intermediate I) to form undecaprenyl-pyrophosphoryl-MurNAc-(pentapeptide)GlcNAc (lipid intermediate II). The sequence is that of UDP-N-acetylglucosamine--N-acetylmuramyl-(pentapeptide) pyrophosphoryl-undecaprenol N-acetylglucosamine transferase from Ruegeria sp. (strain TM1040) (Silicibacter sp.).